A 380-amino-acid chain; its full sequence is Beta-1,3-N-acetylglucosaminyltransferase lunatic fringe (380 aa).

Over 1 to 8 (MLKRCGRR) the chain is Cytoplasmic. A helical; Signal-anchor for type II membrane protein transmembrane segment spans residues 9–29 (LLLALAGALLACLLVLTADPP). Over 30–380 (PPPVPAERGR…TSWCPRSAIF (351 aa)) the chain is Lumenal. The tract at residues 85 to 110 (SRRDVGPPPGGAPRPADGPPRPLAEP) is disordered. Residues 90–107 (GPPPGGAPRPADGPPRPL) show a composition bias toward pro residues. Position 130 (R130) interacts with substrate. The N-linked (GlcNAc...) asparagine glycan is linked to N168. Cystine bridges form between C169–C180 and C198–C261. D202 is a binding site for substrate. D203 is a binding site for Mn(2+). Residue D291 is part of the active site. Residue H315 participates in Mn(2+) binding. C365 and C374 are oxidised to a cystine.

Belongs to the glycosyltransferase 31 family. Mn(2+) serves as cofactor. Requires Co(2+) as cofactor. Post-translationally, a soluble form may be derived from the membrane form by proteolytic processing.

It localises to the golgi apparatus. The protein resides in the golgi apparatus membrane. The catalysed reaction is 3-O-(alpha-L-fucosyl)-L-threonyl-[EGF-like domain protein] + UDP-N-acetyl-alpha-D-glucosamine = 3-O-(N-acetyl-beta-D-glucosaminyl-(1-&gt;3)-alpha-L-fucosyl)-L-threonyl-[EGF-like domain protein] + UDP + H(+). It carries out the reaction 3-O-(alpha-L-fucosyl)-L-seryl-[EGF-like domain protein] + UDP-N-acetyl-alpha-D-glucosamine = 3-O-(N-acetyl-beta-D-glucosaminyl-(1-&gt;3)-alpha-L-fucosyl)-L-seryl-[EGF-like domain protein] + UDP + H(+). Its function is as follows. Glycosyltransferase that initiates the elongation of O-linked fucose residues attached to EGF-like repeats in the extracellular domain of Notch molecules. Modulates NOTCH1 activity by modifying O-fucose residues at specific EGF-like domains resulting in inhibition of NOTCH1 activation by JAG1 and enhancement of NOTCH1 activation by DLL1 via an increase in its binding to DLL1. Decreases the binding of JAG1 to NOTCH2 but not that of DLL1. Essential mediator of somite segmentation and patterning. The protein is Beta-1,3-N-acetylglucosaminyltransferase lunatic fringe (LFNG) of Bos taurus (Bovine).